Here is a 338-residue protein sequence, read N- to C-terminus: Clavatol oxidase claD (338 aa).

One can recognise a Fe2OG dioxygenase domain in the interval 193–299 (DPMSLLRLLH…RYSVVFFYDG (107 aa)). Fe cation contacts are provided by H222, D224, and H280. Residue R290 coordinates 2-oxoglutarate.

This sequence belongs to the iron/ascorbate-dependent oxidoreductase family. Requires Fe(2+) as cofactor.

The enzyme catalyses clavatol + 2-oxoglutarate + O2 = hydroxyclavatol + succinate + CO2. It functions in the pathway secondary metabolite biosynthesis. Its function is as follows. 2-oxoglutarate-dependent dioxygenase; part of the cla gene cluster that produces clavatol and ortho-quinone methide. The clavatol biosynthesis cluster cla and the terrestric acid cluster tra are both involved in the production of peniphenones and penilactones. The non-reducing PKS claF is responsible for the formation of clavatol from successive condensations of 3 malonyl-CoA units, presumably with a simple acetyl-CoA starter unit, and 2 methylation steps. The esterase claE probably collaborates with claF by catalyzing the hydrolysis of ACP-bound acyl intermediates to free the ACP from stalled intermediates. The clavatol oxidase claD then converts clavatol to hydroxyclavatol. Spontaneous dehydration of hydroxyclavatol leads to the accumulation of the highly active ortho-quinone methide. On the other hand, the PKS-NRPS hybrid traA is involved in the formation of crustosic acid, with the help of traB and traD. The polyketide synthase module (PKS) of traA is responsible for the synthesis of the polyketide backbone via the condensation of an acetyl-CoA starter unit with 3 malonyl-CoA units. The downstream nonribosomal peptide synthetase (NRPS) module then amidates the carboxyl end of the polyketide with L-malic acid. Because traA lacks a designated enoylreductase (ER) domain, the required activity is provided the enoyl reductase traG. Crustosic acid undergoes decarboxylation and isomerization to the terrestric acid, catalyzed by the 2-oxoglutarate-dependent dioxygenase traH. Both acids are further converted to the 2 gamma-butyrolactones (R)-5-methyltetronic acid and (S)-5-carboxylmethyltetronic acid, with involvement of the cytochrome P450 monooxygenase claJ. Spontaneous addition of the methide to these gamma-butyrolactones leads to peniphenone D and penilactone D, which undergo again stereospecific attacking by methide to give penilactones A and B. This Penicillium crustosum (Blue mold fungus) protein is Clavatol oxidase claD.